We begin with the raw amino-acid sequence, 308 residues long: Mitochondrial import receptor subunit TOM40B (308 aa).

The tract at residues 1–29 (MGNTLGLAPMGTLPRRSHRREEPLPNPGS) is disordered. The interval 281–308 (PLPVTLALGAFLNHWRNRFHCGFSITVG) is required for mitochondrial targeting.

It belongs to the Tom40 family. As to quaternary structure, forms part of the preprotein translocase of the outer mitochondrial membrane (TOM complex) containing TOMM22, TOMM40, TOMM40L and TOMM70. Interacts with mitochondrial targeting sequences.

It is found in the mitochondrion outer membrane. In terms of biological role, potential channel-forming protein implicated in import of protein precursors into mitochondria. This is Mitochondrial import receptor subunit TOM40B (Tomm40l) from Mus musculus (Mouse).